Consider the following 162-residue polypeptide: Putative colanic acid biosynthesis acetyltransferase WcaB (162 aa).

It belongs to the transferase hexapeptide repeat family.

It functions in the pathway slime biogenesis; slime polysaccharide biosynthesis. This is Putative colanic acid biosynthesis acetyltransferase WcaB (wcaB) from Escherichia coli O157:H7.